We begin with the raw amino-acid sequence, 793 residues long: Alanine--tRNA ligase, mitochondrial (793 aa).

Residues Arg88, Trp187, and 224-226 contribute to the ATP site; that span reads IWN. The L-alanine site is built by Asn226 and Asp249. Gly253 provides a ligand contact to ATP. The Zn(2+) site is built by His594, His598, Cys706, and His710.

Belongs to the class-II aminoacyl-tRNA synthetase family. Monomer. Zn(2+) is required as a cofactor.

The protein localises to the mitochondrion. The catalysed reaction is tRNA(Ala) + L-alanine + ATP = L-alanyl-tRNA(Ala) + AMP + diphosphate. Catalyzes the attachment of alanine to tRNA(Ala) in a two-step reaction: alanine is first activated by ATP to form Ala-AMP and then transferred to the acceptor end of tRNA(Ala). Also edits incorrectly charged tRNA(Ala) via its editing domain. In Caenorhabditis elegans, this protein is Alanine--tRNA ligase, mitochondrial.